Reading from the N-terminus, the 879-residue chain is DNA double-strand break repair Rad50 ATPase (879 aa).

ATP-binding positions include 32-38 and Gln139; that span reads NGAGKSS. Coiled coils occupy residues 184–304 and 342–436; these read IELQ…NKIK and EIKG…NQVK. A Zinc-hook domain is found at 394–492; that stretch reads LQKLNEDLNN…LISELNQIIN (99 aa). Zn(2+) contacts are provided by Cys440 and Cys443. Residues 502–722 are a coiled coil; the sequence is IRNLADYNNL…LITAYDKLKK (221 aa). An ATP-binding site is contributed by 786-791; sequence LLSGGE.

The protein belongs to the SMC family. RAD50 subfamily. Homodimer. Forms a heterotetramer composed of two Mre11 subunits and two Rad50 subunits. Zn(2+) serves as cofactor.

In terms of biological role, part of the Rad50/Mre11 complex, which is involved in the early steps of DNA double-strand break (DSB) repair. The complex may facilitate opening of the processed DNA ends to aid in the recruitment of HerA and NurA. Rad50 controls the balance between DNA end bridging and DNA resection via ATP-dependent structural rearrangements of the Rad50/Mre11 complex. The protein is DNA double-strand break repair Rad50 ATPase of Sulfurisphaera tokodaii (strain DSM 16993 / JCM 10545 / NBRC 100140 / 7) (Sulfolobus tokodaii).